We begin with the raw amino-acid sequence, 483 residues long: Glutamyl-tRNA(Gln) amidotransferase subunit A (483 aa).

Catalysis depends on charge relay system residues K76 and S151. S175 acts as the Acyl-ester intermediate in catalysis.

Belongs to the amidase family. GatA subfamily. Heterotrimer of A, B and C subunits.

The catalysed reaction is L-glutamyl-tRNA(Gln) + L-glutamine + ATP + H2O = L-glutaminyl-tRNA(Gln) + L-glutamate + ADP + phosphate + H(+). Allows the formation of correctly charged Gln-tRNA(Gln) through the transamidation of misacylated Glu-tRNA(Gln) in organisms which lack glutaminyl-tRNA synthetase. The reaction takes place in the presence of glutamine and ATP through an activated gamma-phospho-Glu-tRNA(Gln). The sequence is that of Glutamyl-tRNA(Gln) amidotransferase subunit A from Pseudomonas syringae pv. tomato (strain ATCC BAA-871 / DC3000).